Consider the following 702-residue polypeptide: Penicillin-binding protein activator LpoA (702 aa).

Positions 1–26 are cleaved as a signal peptide; sequence MVPSTFLRSKPARCLPVLLATLIFAG. The N-palmitoyl cysteine moiety is linked to residue cysteine 27. Residue cysteine 27 is the site of S-diacylglycerol cysteine attachment. The disordered stretch occupies residues 327–378; that stretch reads GSRADPVQAPTQDQAAPAAEPAAQAPATSTTPQTTASPATQPVTAPAAQPQP. A compositionally biased stretch (low complexity) spans 330-378; it reads ADPVQAPTQDQAAPAAEPAAQAPATSTTPQTTASPATQPVTAPAAQPQP.

This sequence belongs to the LpoA family. Interacts with PBP1a.

Its subcellular location is the cell outer membrane. Regulator of peptidoglycan synthesis that is essential for the function of penicillin-binding protein 1A (PBP1a). The chain is Penicillin-binding protein activator LpoA from Klebsiella pneumoniae subsp. pneumoniae (strain ATCC 700721 / MGH 78578).